Here is a 337-residue protein sequence, read N- to C-terminus: Glyceraldehyde-3-phosphate dehydrogenase, cytosolic (337 aa).

A binding to NAD region spans residues 1–151; it reads MAKVKVGING…YKSDLNIVSN (151 aa). NAD(+) contacts are provided by residues 13–14, aspartate 35, and arginine 82; that span reads RI. Residues 152-337 are catalytic; sequence ASCTTNCLAP…DLIMHISKCQ (186 aa). D-glyceraldehyde 3-phosphate-binding positions include 153 to 155, threonine 184, 213 to 214, and arginine 236; these read SCT and TG. The Nucleophile role is filled by cysteine 154. Position 318 (asparagine 318) interacts with NAD(+).

Belongs to the glyceraldehyde-3-phosphate dehydrogenase family. Homotetramer.

The protein localises to the cytoplasm. The enzyme catalyses D-glyceraldehyde 3-phosphate + phosphate + NAD(+) = (2R)-3-phospho-glyceroyl phosphate + NADH + H(+). Its pathway is carbohydrate degradation; glycolysis; pyruvate from D-glyceraldehyde 3-phosphate: step 1/5. Key enzyme in glycolysis that catalyzes the first step of the pathway by converting D-glyceraldehyde 3-phosphate (G3P) into 3-phospho-D-glyceroyl phosphate. Essential for the maintenance of cellular ATP levels and carbohydrate metabolism. This Mesembryanthemum crystallinum (Common ice plant) protein is Glyceraldehyde-3-phosphate dehydrogenase, cytosolic (GAPC).